Consider the following 378-residue polypeptide: Dual-specificity RNA methyltransferase RlmN (378 aa).

Residue glutamate 95 is the Proton acceptor of the active site. Residues 101–345 (EETRGTLCVS…TTIRKTRGDD (245 aa)) enclose the Radical SAM core domain. An intrachain disulfide couples cysteine 108 to cysteine 350. Positions 115, 119, and 122 each coordinate [4Fe-4S] cluster. S-adenosyl-L-methionine is bound by residues 176–177 (GE), serine 208, 230–232 (SLH), and asparagine 307. The active-site S-methylcysteine intermediate is cysteine 350.

The protein belongs to the radical SAM superfamily. RlmN family. The cofactor is [4Fe-4S] cluster.

It localises to the cytoplasm. It catalyses the reaction adenosine(2503) in 23S rRNA + 2 reduced [2Fe-2S]-[ferredoxin] + 2 S-adenosyl-L-methionine = 2-methyladenosine(2503) in 23S rRNA + 5'-deoxyadenosine + L-methionine + 2 oxidized [2Fe-2S]-[ferredoxin] + S-adenosyl-L-homocysteine. The enzyme catalyses adenosine(37) in tRNA + 2 reduced [2Fe-2S]-[ferredoxin] + 2 S-adenosyl-L-methionine = 2-methyladenosine(37) in tRNA + 5'-deoxyadenosine + L-methionine + 2 oxidized [2Fe-2S]-[ferredoxin] + S-adenosyl-L-homocysteine. Its function is as follows. Specifically methylates position 2 of adenine 2503 in 23S rRNA and position 2 of adenine 37 in tRNAs. m2A2503 modification seems to play a crucial role in the proofreading step occurring at the peptidyl transferase center and thus would serve to optimize ribosomal fidelity. In Burkholderia pseudomallei (strain K96243), this protein is Dual-specificity RNA methyltransferase RlmN.